Consider the following 64-residue polypeptide: Large ribosomal subunit protein bL35 (64 aa).

Residues 1 to 22 (MPKMKSHTGMGKRVRVTGKGKI) are compositionally biased toward basic residues. The disordered stretch occupies residues 1 to 39 (MPKMKSHTGMGKRVRVTGKGKIVKQQAGLRHNLEKKPST).

Belongs to the bacterial ribosomal protein bL35 family.

The chain is Large ribosomal subunit protein bL35 from Salinispora arenicola (strain CNS-205).